The sequence spans 1086 residues: WD repeat-containing protein 64 (1086 aa).

9 WD repeats span residues 129 to 168 (RRRDVIKCIVKVPQLDLLITASQKGLITVFNSQDTSWITG), 170 to 199 (DYLGQLKRIVATTERTIIVWDYKAQGSSQE), 321 to 360 (AMPRGANSFCYCGKANVIVTGGDDKVLRLWHPNISTKPVG), 364 to 403 (GHMFSITEIVSNEKEQHVISLSSAKVFRVWDIQTLSVLQV), 411 to 448 (PGDMQIYSMVYDANHGMLITGSGVIDMYPLTRMIQDTK), 453 to 492 (THEREVNVTLYNKYFHQVLTVCSESVIKVWELETGLQIYQ), 498 to 537 (GLSIELTCAAIDESGYLFATGAYNGTVKIWDFGSGQEMKM), 560 to 602 (QVKQ…PYLQ), and 642 to 683 (IVDV…VKEI). The disordered stretch occupies residues 724-749 (ICSSTQCDSSKGPQSSKGSKQSIHDA). The segment covering 732 to 744 (SSKGPQSSKGSKQ) has biased composition (low complexity). 3 WD repeats span residues 765–806 (ASRK…KDML), 809–850 (TKHS…DPPH), and 863–902 (AHSLEIIQVIYVEEKQLVLTASIDGSVRIWNSTSGHYCGY). Residues 1047-1069 (DKVKREEAPEMTEGSRRKSLKRN) are disordered. The segment covering 1049–1062 (VKREEAPEMTEGSR) has biased composition (basic and acidic residues).

This chain is WD repeat-containing protein 64 (Wdr64), found in Mus musculus (Mouse).